Consider the following 715-residue polypeptide: MGYQLSATLKGHDQDVRDVVAVDDSKVASVSRDGTVRLWSKDDQWLGTVVYTGQGFLNSVCYDSEKELLLFGGKDTMINGVPLFATSGEDPLYTLIGHQGNVCSLSFQDGVVISGSWDKTAKVWKEGSLVYNLQAHNASVWDAKVVSFSENKFLTASADKTIKLWQNDKVIKTFSGIHNDVVRHLAVVDDGHFISCSNDGLIKLVDMHTGDVLRTYEGHESFVYCIKLLPNGDIVSCGEDRTVRIWSKENGSLKQVITLPAISIWSVDCMSNGDIIVGSSDNLVRIFSQEKSRWASEDEINELSTQVEKSTISSKTIEFDESKLSPYEILQSPGRKEGQIVVVKSPQGTIEAHQFSNSSWKKVGDVVGAGATGNDKKIEFEGKTYDYVFDVDIEDGKPPLKLPINVSDNPYTAADNFLARYELPMSYRDQVVQFILKNTNGISLDQPNDNASSSAVSPSKTSVMKVLPVKQYLIMENYNPDTIFNGIVKINSNEKTFDDEILAQIGGALHDIDESWELLLSFANTIRSNWEIKTPAYDIVRLIVKKLPYSSDIKDYIEEGLGNKNITLTMLTVRILVNCFNNENWGVKLLESNQVYKSIFETIDTEFSQASAKQSQNLAIAVSTLIFNYSALVTKGNSDLELLPIVADAINTKYGPLEEYQECEEAAYRLTVAYGNLATVEPTLRQFANSVTWLANIKRSYGNVPRFKDIFDDLS.

7 WD repeats span residues 11–40, 53–82, 97–125, 135–166, 177–206, 218–247, and 259–288; these read GHDQ…RLWS, GQGF…NGVP, GHQG…KVWK, AHNA…KLWQ, IHND…KLVD, GHES…RIWS, and LPAI…RIFS. The residue at position 332 (serine 332) is a Phosphoserine. The 98-residue stretch at 352-449 folds into the PFU domain; it reads AHQFSNSSWK…NGISLDQPND (98 aa). Positions 434-440 are interaction with HSE1; sequence FILKNTN. One can recognise a PUL domain in the interval 465 to 715; the sequence is KVLPVKQYLI…RFKDIFDDLS (251 aa). ARM repeat units lie at residues 478 to 512, 513 to 543, 544 to 582, 583 to 635, 636 to 680, and 681 to 715; these read YNPD…LHDI, DESW…VRLI, VKKL…CFNN, ENWG…LVTK, GNSD…LATV, and EPTL…DDLS.

This sequence belongs to the WD repeat PLAP family. In terms of assembly, forms a complex composed of CDC48, NPL4, UFD1, DOA1, SHP1 and deubiquitinase OTU1; within the complex interacts with CDC48. Interacts (via PUL domain) with CDC48 (via C-terminus); the interaction is direct. Forms a complex composed of CDC48, DOA1, deubiquitinase UBP3 and probably BRE5; within the complex interacts with CDC48 and UBP3. May form a complex composed of VPS27, HSE1 and DOA1. Interacts with HSE1 (via SH3 domain). Interacts (via WD repeats and PFU domain) with ubiquitin; the interaction is direct. Interacts with ubiquitinated FZO1 but not unmodified FZO1; the interaction recruits FZO1 to CDC48 and promotes FZO1 proteasomal degradation.

It is found in the nucleus. The protein resides in the cytoplasm. Its subcellular location is the mitochondrion outer membrane. The protein localises to the endosome membrane. In terms of biological role, ubiquitin-binding protein involved in protein ubiquitination, sorting and degradation. Acts as a ubiquitinated substrate-recruiting adapter for chaperone ATPase CDC48 by binding mono- or polyubiquitin chains. Depending on the context, promotes or prevents proteasomal degradation of ubiquitinated proteins. Involved in the ubiquitin fusion degradation (UFD) pathway by promoting the degradation of ubiquitinated proteins. Involved in the mitochondria-associated degradation pathway (MAD) by promoting the degradation of several ubiquitinated membrane proteins. By competing with UFD2 to bind CDC48, prevents the multi-ubiquitination and subsequent degradation of UFD2-dependent substrates. Required for ribophagy, a process which relocalizes ribosomal particles into the vacuole for degradation in response to starvation. Involved in the ubiquitin-mediated sorting of membrane proteins into multivesicular bodies (MVBs). In addition, plays an essential role in maintaining cellular ubiquitin levels. May affect indirectly the degradation of ubiquitinylated proteins by regulating cellular ubiquitin levels. The chain is Protein DOA1 from Saccharomyces cerevisiae (strain ATCC 204508 / S288c) (Baker's yeast).